We begin with the raw amino-acid sequence, 84 residues long: Small ribosomal subunit protein bS16 (84 aa).

It belongs to the bacterial ribosomal protein bS16 family.

This chain is Small ribosomal subunit protein bS16, found in Endomicrobium trichonymphae.